The sequence spans 738 residues: Coiled-coil domain-containing protein 142 (738 aa).

The tract at residues 1 to 34 is disordered; that stretch reads MARASSSSGPLPPLANVPSSWAQPVGAGEERDEG. Residues 69 to 92 are a coiled coil; that stretch reads ALQRLRATLLRLHREREQLLRARD. Residues 682 to 704 are disordered; sequence LSTLGGGGRGGGGGGGPGPSPEA. Residues 685–698 show a composition bias toward gly residues; it reads LGGGGRGGGGGGGP.

The sequence is that of Coiled-coil domain-containing protein 142 (Ccdc142) from Mus musculus (Mouse).